A 276-amino-acid polypeptide reads, in one-letter code: 1H-3-hydroxy-4-oxoquinaldine 2,4-dioxygenase (276 aa).

Residues 28-150 (PAILLLPGWC…TLLKDPERWR (123 aa)) enclose the AB hydrolase-1 domain. Substrate contacts are provided by residues 36-38 (WCH), 100-101 (HS), and Trp-160. The Proton donor/acceptor role is filled by His-251.

The protein belongs to the AB hydrolase superfamily. None. Contrary to most other dioxygenases, this enzyme does not require a cofactor for catalysis. is required as a cofactor.

It carries out the reaction 3-hydroxy-2-methyl-1H-quinolin-4-one + O2 = N-acetylanthranilate + CO + H(+). Its function is as follows. Ring-cleaving dioxygenase involved in quinaldine degradation and utilization. In Paenarthrobacter nitroguajacolicus (Arthrobacter nitroguajacolicus), this protein is 1H-3-hydroxy-4-oxoquinaldine 2,4-dioxygenase (hod).